Reading from the N-terminus, the 106-residue chain is ATP-dependent Clp protease adapter protein ClpS (106 aa).

The protein belongs to the ClpS family. In terms of assembly, binds to the N-terminal domain of the chaperone ClpA.

Functionally, involved in the modulation of the specificity of the ClpAP-mediated ATP-dependent protein degradation. This Yersinia pestis bv. Antiqua (strain Antiqua) protein is ATP-dependent Clp protease adapter protein ClpS.